Here is a 317-residue protein sequence, read N- to C-terminus: Type II methyltransferase M.MgeORF184P (317 aa).

The protein belongs to the N(4)/N(6)-methyltransferase family.

The catalysed reaction is a 2'-deoxyadenosine in DNA + S-adenosyl-L-methionine = an N(6)-methyl-2'-deoxyadenosine in DNA + S-adenosyl-L-homocysteine + H(+). Functionally, probably recognizes the double-stranded sequence 5'-CTAT-3' and methylates A-3 on only one strand; as the bacterial DNA is methylated on this sequence and this is the only type II methylase in the genome, it is probably responsible for all of the methylation on this site in the genome. The sequence is that of Type II methyltransferase M.MgeORF184P from Mycoplasma genitalium (strain ATCC 33530 / DSM 19775 / NCTC 10195 / G37) (Mycoplasmoides genitalium).